We begin with the raw amino-acid sequence, 268 residues long: Tryptophan synthase alpha chain (268 aa).

Catalysis depends on proton acceptor residues E40 and D51.

Belongs to the TrpA family. In terms of assembly, tetramer of two alpha and two beta chains.

The enzyme catalyses (1S,2R)-1-C-(indol-3-yl)glycerol 3-phosphate + L-serine = D-glyceraldehyde 3-phosphate + L-tryptophan + H2O. It functions in the pathway amino-acid biosynthesis; L-tryptophan biosynthesis; L-tryptophan from chorismate: step 5/5. Its function is as follows. The alpha subunit is responsible for the aldol cleavage of indoleglycerol phosphate to indole and glyceraldehyde 3-phosphate. The sequence is that of Tryptophan synthase alpha chain from Geobacillus thermodenitrificans (strain NG80-2).